Reading from the N-terminus, the 380-residue chain is O-phospho-L-seryl-tRNA:Cys-tRNA synthase (380 aa).

Pyridoxal 5'-phosphate-binding positions include 86-87 (AR), Asn-192, and 215-217 (SGH). The residue at position 218 (Lys-218) is an N6-(pyridoxal phosphate)lysine.

The protein belongs to the SepCysS family. In terms of assembly, homodimer. Interacts with SepRS. Requires pyridoxal 5'-phosphate as cofactor.

It catalyses the reaction O-phospho-L-seryl-tRNA(Cys) + hydrogen sulfide + H(+) = L-cysteinyl-tRNA(Cys) + phosphate. Functionally, converts O-phospho-L-seryl-tRNA(Cys) (Sep-tRNA(Cys)) to L-cysteinyl-tRNA(Cys) (Cys-tRNA(Cys)). The polypeptide is O-phospho-L-seryl-tRNA:Cys-tRNA synthase (Methanococcus maripaludis (strain C7 / ATCC BAA-1331)).